Here is a 145-residue protein sequence, read N- to C-terminus: D-aminoacyl-tRNA deacylase (145 aa).

Residues 137-138 (GP) carry the Gly-cisPro motif, important for rejection of L-amino acids motif.

It belongs to the DTD family. In terms of assembly, homodimer.

Its subcellular location is the cytoplasm. The enzyme catalyses glycyl-tRNA(Ala) + H2O = tRNA(Ala) + glycine + H(+). It carries out the reaction a D-aminoacyl-tRNA + H2O = a tRNA + a D-alpha-amino acid + H(+). Its function is as follows. An aminoacyl-tRNA editing enzyme that deacylates mischarged D-aminoacyl-tRNAs. Also deacylates mischarged glycyl-tRNA(Ala), protecting cells against glycine mischarging by AlaRS. Acts via tRNA-based rather than protein-based catalysis; rejects L-amino acids rather than detecting D-amino acids in the active site. By recycling D-aminoacyl-tRNA to D-amino acids and free tRNA molecules, this enzyme counteracts the toxicity associated with the formation of D-aminoacyl-tRNA entities in vivo and helps enforce protein L-homochirality. The polypeptide is D-aminoacyl-tRNA deacylase (Stutzerimonas stutzeri (strain A1501) (Pseudomonas stutzeri)).